A 449-amino-acid polypeptide reads, in one-letter code: MKKRSFKVFTLSLQHVLAMYAGAILVPLLVGRALNVTTEQLSYLLAIDLLTCGVATLLQTLRGTYIGIGLPVMLGSSFVAVTPMIAIGSNYGIHAIYGSIIAAGVFIFLFARFFGKLTVLFPPVVTGTVVTLIGLSLVPTGVKNMAGGEKINGSANPEYGSLENLLLSVGVLVLILVLNRFLKGFARTLSVLIGIAAGTAAAAIMGKVSFSSVTEAPFFQIPKPFYFGAPAFEIGPILTMLIVGIVIIVESTGVFYAIGKICGRPLTDKDLVKGYRAEGIAILIGGLFNAFPYNTFAQNAGLLQLTKVKTRNIVVTAGCILVCLGLIPKIAALASAVPAAVLGGATVVMFGMVIASGVKMLSTADLKNQYHLLTIACSIALGIGASTAPGIFAEFPAPIRILVSDGTITGSLTAIFLNLFFSLRDKKELTAQQTELPVLEHTLALEKEV.

Helical transmembrane passes span 11 to 31, 41 to 61, 67 to 87, 91 to 111, 119 to 139, 158 to 178, 191 to 211, 229 to 249, 277 to 297, 313 to 333, 334 to 354, 372 to 392, and 401 to 421; these read LSLQHVLAMYAGAILVPLLVG, LSYLLAIDLLTCGVATLLQTL, GIGLPVMLGSSFVAVTPMIAI, YGIHAIYGSIIAAGVFIFLFA, VLFPPVVTGTVVTLIGLSLVP, EYGSLENLLLSVGVLVLILVL, VLIGIAAGTAAAAIMGKVSFS, APAFEIGPILTMLIVGIVIIV, AEGIAILIGGLFNAFPYNTFA, IVVTAGCILVCLGLIPKIAAL, ASAVPAAVLGGATVVMFGMVI, LLTIACSIALGIGASTAPGIF, and ILVSDGTITGSLTAIFLNLFF.

It belongs to the nucleobase:cation symporter-2 (NCS2) (TC 2.A.40) family.

The protein resides in the cell membrane. In terms of biological role, uptake of uric acid. The chain is Uric acid permease PucJ (pucJ) from Bacillus subtilis (strain 168).